The chain runs to 343 residues: Holliday junction branch migration complex subunit RuvB (343 aa).

The large ATPase domain (RuvB-L) stretch occupies residues 4–193 (TDNLTAAQPQ…FGIVSRLEFY (190 aa)). ATP contacts are provided by residues Leu-32, Arg-33, Gly-74, Lys-77, Thr-78, Thr-79, 140-142 (EDY), Arg-183, Tyr-193, and Arg-230. Thr-78 is a binding site for Mg(2+). Residues 194–264 (ENRDLATIVS…IADAALSMLD (71 aa)) are small ATPAse domain (RuvB-S). Positions 267-343 (VQGLDVMDRK…YLHFGLPVEK (77 aa)) are head domain (RuvB-H). Residues Arg-322 and Arg-327 each contribute to the DNA site.

This sequence belongs to the RuvB family. As to quaternary structure, homohexamer. Forms an RuvA(8)-RuvB(12)-Holliday junction (HJ) complex. HJ DNA is sandwiched between 2 RuvA tetramers; dsDNA enters through RuvA and exits via RuvB. An RuvB hexamer assembles on each DNA strand where it exits the tetramer. Each RuvB hexamer is contacted by two RuvA subunits (via domain III) on 2 adjacent RuvB subunits; this complex drives branch migration. In the full resolvosome a probable DNA-RuvA(4)-RuvB(12)-RuvC(2) complex forms which resolves the HJ.

The protein resides in the cytoplasm. It catalyses the reaction ATP + H2O = ADP + phosphate + H(+). In terms of biological role, the RuvA-RuvB-RuvC complex processes Holliday junction (HJ) DNA during genetic recombination and DNA repair, while the RuvA-RuvB complex plays an important role in the rescue of blocked DNA replication forks via replication fork reversal (RFR). RuvA specifically binds to HJ cruciform DNA, conferring on it an open structure. The RuvB hexamer acts as an ATP-dependent pump, pulling dsDNA into and through the RuvAB complex. RuvB forms 2 homohexamers on either side of HJ DNA bound by 1 or 2 RuvA tetramers; 4 subunits per hexamer contact DNA at a time. Coordinated motions by a converter formed by DNA-disengaged RuvB subunits stimulates ATP hydrolysis and nucleotide exchange. Immobilization of the converter enables RuvB to convert the ATP-contained energy into a lever motion, pulling 2 nucleotides of DNA out of the RuvA tetramer per ATP hydrolyzed, thus driving DNA branch migration. The RuvB motors rotate together with the DNA substrate, which together with the progressing nucleotide cycle form the mechanistic basis for DNA recombination by continuous HJ branch migration. Branch migration allows RuvC to scan DNA until it finds its consensus sequence, where it cleaves and resolves cruciform DNA. The polypeptide is Holliday junction branch migration complex subunit RuvB (Neisseria meningitidis serogroup A / serotype 4A (strain DSM 15465 / Z2491)).